A 205-amino-acid chain; its full sequence is Protein Rcp (205 aa).

The protein belongs to the NAD(P)-dependent epimerase/dehydratase family.

This chain is Protein Rcp (rcp), found in Vibrio cholerae serotype O1 (strain ATCC 39315 / El Tor Inaba N16961).